The sequence spans 63 residues: Large ribosomal subunit protein uL30 (63 aa).

This sequence belongs to the universal ribosomal protein uL30 family. Part of the 50S ribosomal subunit.

This is Large ribosomal subunit protein uL30 from Rickettsia typhi (strain ATCC VR-144 / Wilmington).